The primary structure comprises 334 residues: HTH-type transcriptional repressor PurR (334 aa).

The 55-residue stretch at Ala2–Cys56 folds into the HTH lacI-type domain. Residues Ile4–Asn23 constitute a DNA-binding region (H-T-H motif). A DNA-binding region spans residues Ser48–Cys56. Hypoxanthine contacts are provided by Phe73, Lys189, Thr191, Phe220, and Asp274.

As to quaternary structure, homodimer.

It participates in purine metabolism; purine nucleotide biosynthesis [regulation]. Functionally, is the main repressor of the genes involved in the de novo synthesis of purine nucleotides, regulating purB, purC, purEK, purF, purHD, purL, purMN and guaBA expression. PurR is allosterically activated to bind its cognate DNA by binding the purine corepressors, hypoxanthine or guanine, thereby effecting transcription repression. The protein is HTH-type transcriptional repressor PurR of Photobacterium profundum (strain SS9).